The primary structure comprises 147 residues: MVHLTPDEKNAVCALWGKVNVEEVGGEALGRLLVVYPWTQRFFDSFGDLSSPSAVMGNPKVKAHGKKVLSAFSEGLNHLDNLKGTFAKLSELHCDKLHVDPENFRLLGNVLVVVLAHHFGKDFTPEVQAAYQKVVAGVATALAHKYH.

The Globin domain occupies 3-147 (HLTPDEKNAV…VATALAHKYH (145 aa)). Ser51 carries the post-translational modification Phosphoserine. His64 and His93 together coordinate heme b.

Belongs to the globin family. As to quaternary structure, heterotetramer of two delta chains and two alpha chains. Red blood cells.

This Otolemur crassicaudatus (Brown greater galago) protein is Hemoglobin subunit delta (HBD).